We begin with the raw amino-acid sequence, 854 residues long: MSLSEEQARSFLDQNPDFARQYFGKKLSPENVAAACEDGCPPDCDSLRDLCQVEESTALLELVQDMQESINMERVVFKVLRRLCTLLQADRCSLFMYRQRNGVAELATRLFSVQPDSVLEDCLVPPDSEIVFPLDIGVVGHVAQTKKMVNVEDVAECPHFSSFADELTDYKTKNMLATPIMNGKDVVAVIMAVNKLNGPFFTSEDEDVFLKYLNFATLYLKIYHLSYLHNCETRRGQVLLWSANKVFEELTDIERQFHKAFYTVRAYLNCERYSVGLLDMTKEKEFFDVWSVLMGESQPYSGPRTPDGREIVFYKVIDYVLHGKEEIKVIPTPSADHWALASGLPSYVAESGFICNIMNASADEMFKFQEGALDDSGWLIKNVLSMPIVNKKEEIVGVATFYNRKDGKPFDEQDEVLMESLTQFLGWSVMNTDTYDKMNKLENRKDIAQDMVLYHVKCDRDEIQLILPTRARLGKEPADCDEDELGEILKEELPGPTTFDIYEFHFSDLECTELDLVKCGIQMYYELGVVRKFQIPQEVLVRFLFSISKGYRRITYHNWRHGFNVAQTMFTLLMTGKLKSYYTDLEAFAMVTAGLCHDIDHRGTNNLYQMKSQNPLAKLHGSSILERHHLEFGKFLLSEETLNIYQNLNRRQHEHVIHLMDIAIIATDLALYFKKRAMFQKIVDESKNYQDKKSWVEYLSLETTRKEIVMAMMMTACDLSAITKPWEVQSKVALLVAAEFWEQGDLERTVLDQQPIPMMDRNKAAELPKLQVGFIDFVCTFVYKEFSRFHEEILPMFDRLQNNRKEWKALADEYEAKVKALEEKEEEERVAAKKVGTEICNGGPAPKSSTCCIL.

Ser-2 is modified (N-acetylserine). GAF domains follow at residues 71–220 (NMER…TLYL) and 252–429 (DIER…GWSV). The 334-residue stretch at 481-814 (DEDELGEILK…KEWKALADEY (334 aa)) folds into the PDEase domain. His-557 functions as the Proton donor in the catalytic mechanism. A divalent metal cation-binding residues include His-561, His-597, Asp-598, and Asp-718. Cys-851 carries the S-geranylgeranyl cysteine lipid modification. A propeptide spans 852 to 854 (CIL) (removed in mature form).

This sequence belongs to the cyclic nucleotide phosphodiesterase family. Oligomer composed of two catalytic chains (alpha and beta), an inhibitory chain (gamma) and the delta chain. A divalent metal cation serves as cofactor.

The protein localises to the membrane. It localises to the cell projection. The protein resides in the cilium. Its subcellular location is the photoreceptor outer segment. It catalyses the reaction 3',5'-cyclic GMP + H2O = GMP + H(+). In terms of biological role, rod-specific cGMP phosphodiesterase that catalyzes the hydrolysis of 3',5'-cyclic GMP. Necessary for the formation of a functional phosphodiesterase holoenzyme. Involved in retinal circadian rhythm photoentrainment via modulation of UVA and orange light-induced phase-shift of the retina clock. May participate in processes of transmission and amplification of the visual signal. The polypeptide is Rod cGMP-specific 3',5'-cyclic phosphodiesterase subunit beta (Homo sapiens (Human)).